Here is a 350-residue protein sequence, read N- to C-terminus: 4-hydroxy-3-methylbut-2-en-1-yl diphosphate synthase (flavodoxin) (350 aa).

[4Fe-4S] cluster is bound by residues Cys263, Cys266, Cys298, and Glu305.

This sequence belongs to the IspG family. The cofactor is [4Fe-4S] cluster.

The enzyme catalyses (2E)-4-hydroxy-3-methylbut-2-enyl diphosphate + oxidized [flavodoxin] + H2O + 2 H(+) = 2-C-methyl-D-erythritol 2,4-cyclic diphosphate + reduced [flavodoxin]. It participates in isoprenoid biosynthesis; isopentenyl diphosphate biosynthesis via DXP pathway; isopentenyl diphosphate from 1-deoxy-D-xylulose 5-phosphate: step 5/6. Converts 2C-methyl-D-erythritol 2,4-cyclodiphosphate (ME-2,4cPP) into 1-hydroxy-2-methyl-2-(E)-butenyl 4-diphosphate. The polypeptide is 4-hydroxy-3-methylbut-2-en-1-yl diphosphate synthase (flavodoxin) (Nautilia profundicola (strain ATCC BAA-1463 / DSM 18972 / AmH)).